A 739-amino-acid chain; its full sequence is ABC transporter G family member 20 (739 aa).

The 264-residue stretch at 88 to 351 (LSFKDLTYSV…FSEFGHPIPE (264 aa)) folds into the ABC transporter domain. 144–151 (GASGSGKS) lines the ATP pocket. Positions 433–643 (TEMLVIGKRS…PYEGVLQNEF (211 aa)) constitute an ABC transmembrane type-2 domain. Helical transmembrane passes span 452–472 (LFGIRLGAVLVTGMILATIFW), 487–507 (FFAFAMSTTFYTCAEAIPVFL), 528–548 (VLAHTIISIPALIILSAAFAA), 563–583 (FLFFFFTILTAFWAGSSFVTF), 593–613 (IGFTVVVAILAYFLLFSGFFI), and 712–732 (LWITVAWGFFFRVLFYFTLLI).

The protein belongs to the ABC transporter superfamily. ABCG family. Eye pigment precursor importer (TC 3.A.1.204) subfamily.

The protein localises to the membrane. The chain is ABC transporter G family member 20 (ABCG20) from Arabidopsis thaliana (Mouse-ear cress).